A 732-amino-acid polypeptide reads, in one-letter code: 1,4-alpha-glucan branching enzyme GlgB (732 aa).

The active-site Nucleophile is Asp-415. The Proton donor role is filled by Glu-468.

It belongs to the glycosyl hydrolase 13 family. GlgB subfamily. As to quaternary structure, monomer.

It carries out the reaction Transfers a segment of a (1-&gt;4)-alpha-D-glucan chain to a primary hydroxy group in a similar glucan chain.. The protein operates within glycan biosynthesis; glycogen biosynthesis. In terms of biological role, catalyzes the formation of the alpha-1,6-glucosidic linkages in glycogen by scission of a 1,4-alpha-linked oligosaccharide from growing alpha-1,4-glucan chains and the subsequent attachment of the oligosaccharide to the alpha-1,6 position. The chain is 1,4-alpha-glucan branching enzyme GlgB from Nitrosomonas eutropha (strain DSM 101675 / C91 / Nm57).